Consider the following 252-residue polypeptide: MLKSGFYLLGGVVGAASSLPAFLAATTRSIWDPVNAGDVAAVGEITALTALEHMKQSMMSDRTGRMILRTQPRVTDETLEFASRQPPGTFGHRYAQFMKFNRFTPNGRTPVAHVADPTLAYVMQRQRETHDFLHTCIGCGRTVEEEIIVKLLEWRHTGLPIGLLAVIGSLPWLSRQQLRNMELYFEWAEVNAPNQRHGEVYIPYITNVWWESYLDKPYEQLLADTGITPIDVFLQQKKGKAALANGEAIDGK.

The Zn(2+) site is built by His-130, Asp-131, His-134, and Glu-146.

The protein belongs to the COQ4 family. In terms of assembly, component of a multi-subunit COQ enzyme complex. Zn(2+) is required as a cofactor.

It is found in the mitochondrion inner membrane. It catalyses the reaction a 4-hydroxy-3-methoxy-5-(all-trans-polyprenyl)benzoate + H(+) = a 2-methoxy-6-(all-trans-polyprenyl)phenol + CO2. It functions in the pathway cofactor biosynthesis; ubiquinone biosynthesis. Lyase that catalyzes the C1-decarboxylation of 4-hydroxy-3-methoxy-5-(all-trans-polyprenyl)benzoic acid into 2-methoxy-6-(all-trans-polyprenyl)phenol during ubiquinone biosynthesis. The protein is Ubiquinone biosynthesis protein COQ4 homolog 2, mitochondrial of Trypanosoma cruzi (strain CL Brener).